Here is a 414-residue protein sequence, read N- to C-terminus: Dimethylsulfoniopropionate lyase DddY (414 aa).

The N-terminal stretch at 1-18 is a signal peptide; it reads MKYMVLFSGLLFSNVLVA.

Belongs to the DMSP lyase DddY family.

The protein resides in the periplasm. It catalyses the reaction S,S-dimethyl-beta-propiothetin = acrylate + dimethyl sulfide + H(+). Functionally, catalyzes the cleavage of dimethylsulfoniopropionate (DMSP) into dimethyl sulfide (DMS) and acrylate. In Shewanella woodyi (strain ATCC 51908 / MS32), this protein is Dimethylsulfoniopropionate lyase DddY.